A 321-amino-acid chain; its full sequence is Phospho-N-acetylmuramoyl-pentapeptide-transferase (321 aa).

Helical transmembrane passes span 1-21 (MSLL…FALM), 53-73 (TMGG…VGGW), 77-97 (LQPT…LGFW), 110-130 (GLKA…LTLV), 145-165 (LGVW…LVGF), 174-194 (GLDG…AVIA), 200-220 (YNVM…FVYN), 226-248 (IFMG…ILLH), and 301-321 (IDIV…ATII).

It belongs to the glycosyltransferase 4 family. MraY subfamily. It depends on Mg(2+) as a cofactor.

It is found in the cell membrane. The catalysed reaction is UDP-N-acetyl-alpha-D-muramoyl-L-alanyl-gamma-D-glutamyl-L-lysyl-D-alanyl-D-alanine + di-trans,octa-cis-undecaprenyl phosphate = Mur2Ac(oyl-L-Ala-gamma-D-Glu-L-Lys-D-Ala-D-Ala)-di-trans,octa-cis-undecaprenyl diphosphate + UMP. Its pathway is cell wall biogenesis; peptidoglycan biosynthesis. Functionally, catalyzes the initial step of the lipid cycle reactions in the biosynthesis of the cell wall peptidoglycan: transfers peptidoglycan precursor phospho-MurNAc-pentapeptide from UDP-MurNAc-pentapeptide onto the lipid carrier undecaprenyl phosphate, yielding undecaprenyl-pyrophosphoryl-MurNAc-pentapeptide, known as lipid I. The chain is Phospho-N-acetylmuramoyl-pentapeptide-transferase from Lactiplantibacillus plantarum (strain ATCC BAA-793 / NCIMB 8826 / WCFS1) (Lactobacillus plantarum).